The following is a 220-amino-acid chain: Translation initiation factor 6 (220 aa).

It belongs to the eIF-6 family.

In terms of biological role, binds to the 50S ribosomal subunit and prevents its association with the 30S ribosomal subunit to form the 70S initiation complex. The polypeptide is Translation initiation factor 6 (Halobacterium salinarum (strain ATCC 29341 / DSM 671 / R1)).